The primary structure comprises 241 residues: Thiamine import ATP-binding protein ThiQ (241 aa).

One can recognise an ABC transporter domain in the interval 7-235 (IRLSDVRFSY…AGPEALRHYI (229 aa)). 37–44 (GPSGSGKS) is a binding site for ATP.

This sequence belongs to the ABC transporter superfamily. Thiamine importer (TC 3.A.1.19.1) family. In terms of assembly, the complex is composed of two ATP-binding proteins (ThiQ), two transmembrane proteins (ThiP) and a solute-binding protein (ThiB).

It is found in the cell inner membrane. The enzyme catalyses thiamine(out) + ATP + H2O = thiamine(in) + ADP + phosphate + H(+). Part of the ABC transporter complex ThiBPQ involved in thiamine import. Responsible for energy coupling to the transport system. This Brucella abortus biovar 1 (strain 9-941) protein is Thiamine import ATP-binding protein ThiQ.